The primary structure comprises 564 residues: Formate--tetrahydrofolate ligase (564 aa).

Thr-65–Thr-72 contacts ATP.

Belongs to the formate--tetrahydrofolate ligase family.

It carries out the reaction (6S)-5,6,7,8-tetrahydrofolate + formate + ATP = (6R)-10-formyltetrahydrofolate + ADP + phosphate. It functions in the pathway one-carbon metabolism; tetrahydrofolate interconversion. This is Formate--tetrahydrofolate ligase from Roseiflexus castenholzii (strain DSM 13941 / HLO8).